Here is a 24-residue protein sequence, read N- to C-terminus: Ascaphin-2 (24 aa).

Expressed by the skin glands.

The protein resides in the secreted. Antimicrobial peptide that shows higher potency against Gram-negative bacteria than against Gram-positive bacteria. Has a very week hemolytic activity. The sequence is that of Ascaphin-2 from Ascaphus truei (Coastal tailed frog).